The sequence spans 102 residues: Small ribosomal subunit protein uS10 (102 aa).

The protein belongs to the universal ribosomal protein uS10 family. In terms of assembly, part of the 30S ribosomal subunit.

Its function is as follows. Involved in the binding of tRNA to the ribosomes. The chain is Small ribosomal subunit protein uS10 from Rhodospirillum centenum (strain ATCC 51521 / SW).